The primary structure comprises 29 residues: Cytochrome b6-f complex subunit 8 (29 aa).

Residues 3 to 23 traverse the membrane as a helical segment; sequence TVSLAWAALMVVFTFSLSLVV.

This sequence belongs to the PetN family. As to quaternary structure, the 4 large subunits of the cytochrome b6-f complex are cytochrome b6, subunit IV (17 kDa polypeptide, PetD), cytochrome f and the Rieske protein, while the 4 small subunits are PetG, PetL, PetM and PetN. The complex functions as a dimer.

It is found in the plastid. It localises to the chloroplast thylakoid membrane. Functionally, component of the cytochrome b6-f complex, which mediates electron transfer between photosystem II (PSII) and photosystem I (PSI), cyclic electron flow around PSI, and state transitions. The polypeptide is Cytochrome b6-f complex subunit 8 (Chloranthus spicatus (Chulantree)).